The chain runs to 362 residues: Melatonin receptor type 1B (362 aa).

At 1–42 the chain is on the extracellular side; the sequence is MSENGSFANCCEAGGWAVRPGWSGAGSARPSRTPRPPWVAPA. N4 is a glycosylation site (N-linked (GlcNAc...) asparagine). Residues 43–63 form a helical membrane-spanning segment; it reads LSAVLIVTTAVDVVGNLLVIL. At 64–76 the chain is on the cytoplasmic side; the sequence is SVLRNRKLRNAGN. The chain crosses the membrane as a helical span at residues 77–97; sequence LFLVSLALADLVVAFYPYPLI. Over 98–115 the chain is Extracellular; the sequence is LVAIFYDGWALGEEHCKA. Residues C113 and C190 are joined by a disulfide bond. The chain crosses the membrane as a helical span at residues 116–136; the sequence is SAFVMGLSVIGSVFNITAIAI. The Cytoplasmic segment spans residues 137 to 155; the sequence is NRYCYICHSMAYHRIYRRW. A helical membrane pass occupies residues 156 to 176; sequence HTPLHICLIWLLTVVALLPNF. Melatonin contacts are provided by N175 and Q194. At 177–200 the chain is on the extracellular side; the sequence is FVGSLEYDPRIYSCTFIQTASTQY. Residues 201-221 form a helical membrane-spanning segment; sequence TAAVVVIHFLLPIAVVSFCYL. Residues 222–253 are Cytoplasmic-facing; the sequence is RIWVLVLQARRKAKPESRLCLKPSDLRSFLTM. The helical transmembrane segment at 254-274 threads the bilayer; sequence FVVFVIFAICWAPLNCIGLAV. Topologically, residues 275 to 287 are extracellular; sequence AINPQEMAPQIPE. A helical transmembrane segment spans residues 288–308; sequence GLFVTSYLLAYFNSCLNAIVY. Residues 309 to 362 are Cytoplasmic-facing; it reads GLLNQNFRREYKRILLALWNPRHCIQDASKGSHAEGLQSPAPPIIGVQHQADAL.

It belongs to the G-protein coupled receptor 1 family. Interacts with GPR61, GPR62 and GPR135. As to expression, expressed in retina and less in brain and hippocampus.

It localises to the cell membrane. High affinity receptor for melatonin. Likely to mediate the reproductive and circadian actions of melatonin. The activity of this receptor is mediated by pertussis toxin sensitive G proteins that inhibit adenylate cyclase activity. The chain is Melatonin receptor type 1B (MTNR1B) from Homo sapiens (Human).